The following is a 317-amino-acid chain: MSQEFLDFELPIAELEAKIEALRSVSQQDQQINLDDEITRLQKKSAELTQKTFANLDAWQVSQMARHPNRPYTLDYIEHIFTDFQTLAGDRAFADDQAIVGGLARLEERPVMIIGHQKGRSIKEKVKRNFGMPAPEGYRKALRLMQMAERFKLPIITFIDTPGAYPGVGAEERGQSEAIARNLREMSMLKVPIICTVIGEGGSGGALAIGVGDKINMLQYSTYSVISPEGCASILWKSAEKASTAAEVMGLTASRLHELKLIDSIIEEPLGGAHRNYDTMSNNLKKRLLADLADLDKLDQETLLDRRYKRLMSYGYC.

Residues 33–294 (NLDDEITRLQ…KKRLLADLAD (262 aa)) form the CoA carboxyltransferase C-terminal domain.

It belongs to the AccA family. In terms of assembly, acetyl-CoA carboxylase is a heterohexamer composed of biotin carboxyl carrier protein (AccB), biotin carboxylase (AccC) and two subunits each of ACCase subunit alpha (AccA) and ACCase subunit beta (AccD).

Its subcellular location is the cytoplasm. The catalysed reaction is N(6)-carboxybiotinyl-L-lysyl-[protein] + acetyl-CoA = N(6)-biotinyl-L-lysyl-[protein] + malonyl-CoA. It functions in the pathway lipid metabolism; malonyl-CoA biosynthesis; malonyl-CoA from acetyl-CoA: step 1/1. Component of the acetyl coenzyme A carboxylase (ACC) complex. First, biotin carboxylase catalyzes the carboxylation of biotin on its carrier protein (BCCP) and then the CO(2) group is transferred by the carboxyltransferase to acetyl-CoA to form malonyl-CoA. This Histophilus somni (strain 129Pt) (Haemophilus somnus) protein is Acetyl-coenzyme A carboxylase carboxyl transferase subunit alpha.